We begin with the raw amino-acid sequence, 678 residues long: Glutamic acid-rich protein (678 aa).

A signal peptide spans 1–25 (MNVLFLSYNICILFFVVCTLNFSTK). The span at 56-79 (EKNKDDNSKSETLLKEEKDEKDDV) shows a compositional bias: basic and acidic residues. 3 disordered regions span residues 56–194 (EKNK…NLDE), 225–445 (ISSV…VVKN), and 520–678 (VVPR…NAKI). A compositionally biased stretch (polar residues) spans 80-107 (PTTSNDNLKNAHNNNEISSSTDPTNIIN). Residues 109–120 (NDKDNENSVDKK) are compositionally biased toward basic and acidic residues. 15 consecutive repeat copies span residues 120–122 (KKD), 123–125 (KKE), 126–128 (KKH), 129–131 (KKD), 132–134 (KKE), 135–137 (KKE), 138–140 (KKD), 141–143 (KKE), 144–146 (KKD), 147–149 (KKE), 150–152 (KKH), 153–155 (KKE), 156–158 (KKH), 159–161 (KKD), and 162–164 (KKK). Residues 120-164 (KKDKKEKKHKKDKKEKKEKKDKKEKKDKKEKKHKKEKKHKKDKKK) are 15 X 3 AA tandem repeats of K-K-[DEHK]. Residues 121-165 (KDKKEKKHKKDKKEKKEKKDKKEKKDKKEKKHKKEKKHKKDKKKK) show a composition bias toward basic residues. Composition is skewed to basic and acidic residues over residues 231–329 (TSND…EEKE) and 371–411 (PEEH…EHKS). Repeat copies occupy residues 372–376 (EEHKE), 377–381 (GEHKE), 382–386 (EEHKE), 387–391 (GEHKE), 392–396 (GEHKE), 397–401 (EEHKE), 402–406 (EEHKK), 407–411 (EEHKS), 412–416 (KEHKS), 417–421 (KGKKD), 422–426 (KGKKD), 427–431 (KGKHK), 432–436 (KAKKE), and 437–441 (KVKKH). The interval 372-416 (EEHKEGEHKEEEHKEGEHKEGEHKEEEHKEEEHKKEEHKSKEHKS) is 9 X 5 AA tandem repeats of [EGK]-E-H-K-[EKS]. Basic residues predominate over residues 412–443 (KEHKSKGKKDKGKKDKGKHKKAKKEKVKKHVV). Residues 417 to 441 (KGKKDKGKKDKGKHKKAKKEKVKKH) are 5 X 5 AA tandem repeats of K-[GAV]-K-[KH]-[DKEH]. Residues 532 to 565 (AKIEEAELQKQKHVDKEEDKKEESKEVQEESKEV) show a composition bias toward basic and acidic residues. Residues 566-663 (QEDEEEVEED…EEEEEEEEEE (98 aa)) show a composition bias toward acidic residues. Basic residues predominate over residues 667–678 (KIKRNLRKNAKI).

The sequence is that of Glutamic acid-rich protein (GARP) from Plasmodium falciparum (isolate FC27 / Papua New Guinea).